The primary structure comprises 151 residues: Large ribosomal subunit protein uL23m (151 aa).

Basic and acidic residues predominate over residues 120-143; that stretch reads DDKKSLEDAKKNHKKFLDKNKDRP. Positions 120 to 151 are disordered; the sequence is DDKKSLEDAKKNHKKFLDKNKDRPGTPGWFSI.

It belongs to the universal ribosomal protein uL23 family. As to quaternary structure, component of the mitochondrial ribosome large subunit (39S) which comprises a 16S rRNA and about 50 distinct proteins.

The protein localises to the mitochondrion. This Anopheles gambiae (African malaria mosquito) protein is Large ribosomal subunit protein uL23m (mRpL23).